The following is a 345-amino-acid chain: Opioid-binding protein/cell adhesion molecule (345 aa).

A signal peptide spans 1 to 27 (MGVCGYLFLPWKCLVVVSLRLLFLVPT). Ig-like C2-type domains are found at residues 39–126 (PKAM…PKTS), 136–219 (PQIM…VKIT), and 223–310 (PPYI…ASIT). 3 N-linked (GlcNAc...) asparagine glycosylation sites follow: Asn44, Asn70, and Asn140. Cys57 and Cys115 form a disulfide bridge. Disulfide bonds link Cys157–Cys202 and Cys244–Cys296. Residues Asn285, Asn293, and Asn306 are each glycosylated (N-linked (GlcNAc...) asparagine). Asn322 carries the GPI-anchor amidated asparagine lipid modification. Residues 323–345 (SASRALACLWLSGTLLAHFFIKF) constitute a propeptide, removed in mature form.

This sequence belongs to the immunoglobulin superfamily. IgLON family.

The protein resides in the cell membrane. Functionally, binds opioids in the presence of acidic lipids; probably involved in cell contact. In Homo sapiens (Human), this protein is Opioid-binding protein/cell adhesion molecule (OPCML).